The chain runs to 918 residues: Protein translocase subunit SecA (918 aa).

ATP is bound by residues Gln87, Gly105–Thr109, and Asp500. Residues Ala876–Arg918 form a disordered region. Zn(2+) contacts are provided by Cys902, Cys904, Cys913, and His914. Residues Lys908–Arg918 are compositionally biased toward basic residues.

This sequence belongs to the SecA family. As to quaternary structure, monomer and homodimer. Part of the essential Sec protein translocation apparatus which comprises SecA, SecYEG and auxiliary proteins SecDF-YajC and YidC. Zn(2+) is required as a cofactor.

It localises to the cell inner membrane. Its subcellular location is the cytoplasm. It carries out the reaction ATP + H2O + cellular proteinSide 1 = ADP + phosphate + cellular proteinSide 2.. Part of the Sec protein translocase complex. Interacts with the SecYEG preprotein conducting channel. Has a central role in coupling the hydrolysis of ATP to the transfer of proteins into and across the cell membrane, serving both as a receptor for the preprotein-SecB complex and as an ATP-driven molecular motor driving the stepwise translocation of polypeptide chains across the membrane. The polypeptide is Protein translocase subunit SecA (Rhodospirillum centenum (strain ATCC 51521 / SW)).